Consider the following 224-residue polypeptide: Lipoprotein-releasing system ATP-binding protein LolD (224 aa).

The 219-residue stretch at 6–224 (LEFCNVSKFF…IVNHSLISSI (219 aa)) folds into the ABC transporter domain. Position 43–50 (43–50 (GASGVGKT)) interacts with ATP.

The protein belongs to the ABC transporter superfamily. Lipoprotein translocase (TC 3.A.1.125) family. As to quaternary structure, the complex is composed of two ATP-binding proteins (LolD) and two transmembrane proteins (LolC and LolE).

It localises to the cell inner membrane. Part of the ABC transporter complex LolCDE involved in the translocation of mature outer membrane-directed lipoproteins, from the inner membrane to the periplasmic chaperone, LolA. Responsible for the formation of the LolA-lipoprotein complex in an ATP-dependent manner. This Neorickettsia sennetsu (strain ATCC VR-367 / Miyayama) (Ehrlichia sennetsu) protein is Lipoprotein-releasing system ATP-binding protein LolD.